A 273-amino-acid polypeptide reads, in one-letter code: MSQTREDSVYLAKLAEQAERYEEMVENMKAVASSGQELSVEERNLLSVAYKNVIGARRASWRIVSSIEQKEESKEKSEHQVELIRSYRSKIETELTKISDDILSVLDSHLIPSATTGESKVFYYKMKGDYHRYLAEFSSGDAREKATNSSLEAYKTASEIATTELPPTHPIRLGLALNFSVFYYEIQNSPDKACHLAKQAFDDAIAELDTLSEESYKDSTLIMQLLRDNLTLWTSDISESGQEDQQQQQQQQQQQQQQQQQAPAEQTQGEPTK.

S2 carries the post-translational modification N-acetylserine. The interval 236 to 273 is disordered; that stretch reads DISESGQEDQQQQQQQQQQQQQQQQQAPAEQTQGEPTK. A compositionally biased stretch (low complexity) spans 245-261; the sequence is QQQQQQQQQQQQQQQQQ. A compositionally biased stretch (polar residues) spans 262–273; sequence APAEQTQGEPTK.

It belongs to the 14-3-3 family. In terms of assembly, interacts with NTH1 (via N-terminus when phosphorylated by PKA); the interaction is direct and activates NTH1. Interacts with FIN1.

It localises to the cytoplasm. The protein localises to the nucleus. This chain is Protein BMH2 (BMH2), found in Saccharomyces cerevisiae (strain ATCC 204508 / S288c) (Baker's yeast).